Reading from the N-terminus, the 226-residue chain is Thiocyanate methyltransferase 1 (226 aa).

Tryptophan 35, tryptophan 39, tryptophan 46, and glycine 73 together coordinate S-adenosyl-L-methionine. Serine 85 is modified (phosphoserine). S-adenosyl-L-methionine contacts are provided by residues aspartate 94, 122 to 123 (DF), and tyrosine 138.

It belongs to the class I-like SAM-binding methyltransferase superfamily. TPMT family. As to expression, ubiquitous.

The catalysed reaction is thiocyanate + S-adenosyl-L-methionine = methyl thiocyanate + S-adenosyl-L-homocysteine. S-adenosyl-L-methionine-dependent methyltransferase. Probably involved in glucosinolate metabolism and defense against phytopathogens. Highly reactive to thiocyanate (NCS(-)) derived from myrosinase-mediated hydrolysis of glucosinolates upon tissue damage. Also accepts halid ions as substrates with a lower affinity. This is Thiocyanate methyltransferase 1 (TMT1) from Brassica oleracea (Wild cabbage).